The following is a 209-amino-acid chain: Ribosomal RNA small subunit methyltransferase G (209 aa).

Positions 74, 79, and 139 each coordinate S-adenosyl-L-methionine.

Belongs to the methyltransferase superfamily. RNA methyltransferase RsmG family.

It is found in the cytoplasm. It catalyses the reaction guanosine(527) in 16S rRNA + S-adenosyl-L-methionine = N(7)-methylguanosine(527) in 16S rRNA + S-adenosyl-L-homocysteine. Functionally, specifically methylates the N7 position of guanine in position 527 of 16S rRNA. This Halorhodospira halophila (strain DSM 244 / SL1) (Ectothiorhodospira halophila (strain DSM 244 / SL1)) protein is Ribosomal RNA small subunit methyltransferase G.